Reading from the N-terminus, the 697-residue chain is Colicin-D (697 aa).

A TonB box motif is present at residues 17-24; that stretch reads HSMVVWPS.

Belongs to the cloacin colicin family.

Colicins are polypeptide toxins produced by and active against E.coli and closely related bacteria. Functionally, colicin D inhibits protein synthesis. In Escherichia coli, this protein is Colicin-D (cda).